A 104-amino-acid chain; its full sequence is Large ribosomal subunit protein uL24 (104 aa).

This sequence belongs to the universal ribosomal protein uL24 family. Part of the 50S ribosomal subunit.

Its function is as follows. One of two assembly initiator proteins, it binds directly to the 5'-end of the 23S rRNA, where it nucleates assembly of the 50S subunit. One of the proteins that surrounds the polypeptide exit tunnel on the outside of the subunit. This Shewanella oneidensis (strain ATCC 700550 / JCM 31522 / CIP 106686 / LMG 19005 / NCIMB 14063 / MR-1) protein is Large ribosomal subunit protein uL24.